Reading from the N-terminus, the 910-residue chain is Periodic tryptophan protein 2 homolog (910 aa).

WD repeat units follow at residues Gly12–Leu50, Asp53–Thr92, Arg94–Asn134, Leu144–Ile183, Ser188–Val227, Gly271–Asn310, Val313–Lys355, Ala358–Thr397, Glu400–Thr439, Pro443–Ser485, Gly486–Val523, Val525–Ser563, Ala586–Lys625, and Arg688–Gln728. Positions Ser867 to Glu910 are disordered. Residues Glu875–Glu910 are compositionally biased toward acidic residues.

It belongs to the WD repeat PWP2 family.

The protein is Periodic tryptophan protein 2 homolog of Caenorhabditis elegans.